The primary structure comprises 499 residues: Serine/threonine-protein kinase RHS3 (499 aa).

The segment at 1–92 (MLLKPGNKLV…NSSKPHTGGD (92 aa)) is disordered. Residues 39–55 (QKQVEQNTKKIEEHQIK) are compositionally biased toward basic and acidic residues. Positions 63–85 (SNHNVNMSSQSNNSESTSTNNSS) are enriched in low complexity. The 324-residue stretch at 113 to 436 (FRVLKRLGYG…ATEIKQHPFF (324 aa)) folds into the Protein kinase domain. Residues 119 to 127 (LGYGDIGSV) and K144 contribute to the ATP site. D240 (proton acceptor) is an active-site residue. Positions 437–499 (EGVNWALIRG…DPDYIVFEYF (63 aa)) constitute an AGC-kinase C-terminal domain.

The protein belongs to the protein kinase superfamily. AGC Ser/Thr protein kinase family. Interacts with PDPK1/PDK1. In terms of processing, autophosphorylated and phosphorylated by PDPK1/PDK1. In terms of tissue distribution, specifically expressed in root hair cells.

The enzyme catalyses L-seryl-[protein] + ATP = O-phospho-L-seryl-[protein] + ADP + H(+). It carries out the reaction L-threonyl-[protein] + ATP = O-phospho-L-threonyl-[protein] + ADP + H(+). Activated by PDPK1/PDK1. Involved in root hair growth and morphogenesis. The protein is Serine/threonine-protein kinase RHS3 of Arabidopsis thaliana (Mouse-ear cress).